We begin with the raw amino-acid sequence, 818 residues long: Glycerol-3-phosphate acyltransferase (818 aa).

The short motif at 305–310 (CHRSHM) is the HXXXXD motif element.

It belongs to the GPAT/DAPAT family.

It localises to the cell inner membrane. The catalysed reaction is sn-glycerol 3-phosphate + an acyl-CoA = a 1-acyl-sn-glycero-3-phosphate + CoA. It participates in phospholipid metabolism; CDP-diacylglycerol biosynthesis; CDP-diacylglycerol from sn-glycerol 3-phosphate: step 1/3. This Edwardsiella ictaluri (strain 93-146) protein is Glycerol-3-phosphate acyltransferase.